A 142-amino-acid polypeptide reads, in one-letter code: Galactose-6-phosphate isomerase subunit LacA 2 (142 aa).

The protein belongs to the LacAB/RpiB family. As to quaternary structure, heteromultimeric protein consisting of LacA and LacB.

It catalyses the reaction aldehydo-D-galactose 6-phosphate = keto-D-tagatose 6-phosphate. It participates in carbohydrate metabolism; D-galactose 6-phosphate degradation; D-tagatose 6-phosphate from D-galactose 6-phosphate: step 1/1. The chain is Galactose-6-phosphate isomerase subunit LacA 2 from Streptococcus pyogenes serotype M3 (strain ATCC BAA-595 / MGAS315).